Consider the following 325-residue polypeptide: E3 ubiquitin-protein ligase EL5 (325 aa).

The disordered stretch occupies residues Met-1–Gly-29. Low complexity predominate over residues Ser-15–Ala-28. A helical transmembrane segment spans residues Ile-38 to Leu-58. The segment at Thr-70–Arg-105 is disordered. The span at Arg-77–Ser-87 shows a compositional bias: basic residues. Over residues Gly-88 to Val-99 the composition is skewed to gly residues. An RING-type; atypical zinc finger spans residues Cys-134 to Arg-176. Disordered stretches follow at residues Gly-267–Glu-289 and Ala-303–Asn-325. Residues Ala-268–Gly-281 show a composition bias toward low complexity.

The protein resides in the cell membrane. It catalyses the reaction S-ubiquitinyl-[E2 ubiquitin-conjugating enzyme]-L-cysteine + [acceptor protein]-L-lysine = [E2 ubiquitin-conjugating enzyme]-L-cysteine + N(6)-ubiquitinyl-[acceptor protein]-L-lysine.. It participates in protein modification; protein ubiquitination. Functions as an E3 ubiquitin-protein ligase in cooperation with the E2 ubiquitin conjugating enzymes UBC5A and UBC5B. Involved in root development. Required for the maintenance of cell viability after the initiation of root primordial formation. May mediate the degradation of cytotoxic proteins produced in root cells after the actions of auxin, cytokinin and jasmonic acid. Mediates 'Lys-48'-linked polyubiquitination of MBP in vitro. The chain is E3 ubiquitin-protein ligase EL5 (EL5.1) from Oryza sativa subsp. japonica (Rice).